The primary structure comprises 203 residues: uncharacterized protein (203 aa).

An N-terminal signal peptide occupies residues 1–23 (MKKIYKALISSLLLSTSINVAYA). Residues 24-87 (ETQYVTENLS…ILNSDLSSTP (64 aa)) enclose the SH3b domain. A helical transmembrane segment spans residues 167 to 189 (IAIQWFIYGGSVLGVGLLFGLLI).

This sequence to E.coli YgiM.

Its subcellular location is the membrane. This is an uncharacterized protein from Haemophilus influenzae (strain ATCC 51907 / DSM 11121 / KW20 / Rd).